Here is a 227-residue protein sequence, read N- to C-terminus: Paired immunoglobulin-like type 2 receptor beta (227 aa).

The first 19 residues, 1-19 (MGRPLLLPLLLLLQPPAFL), serve as a signal peptide directing secretion. At 20–191 (QPGGSTGSGP…WHLSLDTAIR (172 aa)) the chain is on the extracellular side. The Ig-like V-type domain maps to 21–143 (PGGSTGSGPS…SGRQQLQSIK (123 aa)). Asparagine 100 is a glycosylation site (N-linked (GlcNAc...) asparagine). The helical transmembrane segment at 192–212 (VALAVAVLKTVILGLLCLLLL) threads the bilayer. At 213–227 (WWRRRKGSRAPSSDF) the chain is on the cytoplasmic side.

The protein localises to the membrane. Functionally, paired receptors consist of highly related activating and inhibitory receptors and are widely involved in the regulation of the immune system. PILRB is thought to act as a cellular signaling activating receptor that associates with ITAM-bearing adapter molecules on the cell surface. In Homo sapiens (Human), this protein is Paired immunoglobulin-like type 2 receptor beta (PILRB).